Reading from the N-terminus, the 148-residue chain is Cell division protein SepF (148 aa).

Belongs to the SepF family. In terms of assembly, homodimer. Interacts with FtsZ.

The protein localises to the cytoplasm. Its function is as follows. Cell division protein that is part of the divisome complex and is recruited early to the Z-ring. Probably stimulates Z-ring formation, perhaps through the cross-linking of FtsZ protofilaments. Its function overlaps with FtsA. The chain is Cell division protein SepF from Alkaliphilus metalliredigens (strain QYMF).